Here is a 728-residue protein sequence, read N- to C-terminus: Diacylglycerol kinase 1 (728 aa).

Residues 27-48 form a helical membrane-spanning segment; the sequence is GLMFSCFVAALVGILTIAYTAF. 2 Phorbol-ester/DAG-type zinc fingers span residues 79–137 and 149–212; these read PHSW…PKDC and VHQW…GDIC. 2 disordered regions span residues 265–296 and 308–336; these read KQTNETSADTGNSGSNCDESTESTADTGPTVN and VMNGDSSNGDSDSNGKLEKKPSVKRTGSF. Residues 267 to 294 are compositionally biased toward polar residues; the sequence is TNETSADTGNSGSNCDESTESTADTGPT. Over residues 310–319 the composition is skewed to low complexity; it reads NGDSSNGDSD. The region spanning 357–496 is the DAGKc domain; that stretch reads SDARPLLVFI…LDRWKVSILN (140 aa). Glycyl lysine isopeptide (Lys-Gly) (interchain with G-Cter in ubiquitin) cross-links involve residues lysine 491 and lysine 500.

The protein belongs to the eukaryotic diacylglycerol kinase family. Monomer. Expressed in roots, shoots, and leaves.

Its subcellular location is the membrane. The catalysed reaction is a 1,2-diacyl-sn-glycerol + ATP = a 1,2-diacyl-sn-glycero-3-phosphate + ADP + H(+). Phosphorylates the second messenger diacylglycerol (DAG) to generate phosphatidic acid (PA), another important signaling molecule. PA is required for plant development and responses to abiotic stress and pathogen attack. May be involved in the accumulation of PA during cold stress. This Arabidopsis thaliana (Mouse-ear cress) protein is Diacylglycerol kinase 1 (DGK1).